Reading from the N-terminus, the 227-residue chain is Enolase-phosphatase E1 (227 aa).

The Mg(2+) site is built by Asp11 and Glu13. Substrate-binding positions include 118–119 (SS) and Lys161. Asp186 contributes to the Mg(2+) binding site.

It belongs to the HAD-like hydrolase superfamily. MasA/MtnC family. Monomer. Mg(2+) is required as a cofactor.

Its subcellular location is the cytoplasm. The protein resides in the nucleus. The enzyme catalyses 5-methylsulfanyl-2,3-dioxopentyl phosphate + H2O = 1,2-dihydroxy-5-(methylsulfanyl)pent-1-en-3-one + phosphate. It functions in the pathway amino-acid biosynthesis; L-methionine biosynthesis via salvage pathway; L-methionine from S-methyl-5-thio-alpha-D-ribose 1-phosphate: step 3/6. It participates in amino-acid biosynthesis; L-methionine biosynthesis via salvage pathway; L-methionine from S-methyl-5-thio-alpha-D-ribose 1-phosphate: step 4/6. In terms of biological role, bifunctional enzyme that catalyzes the enolization of 2,3-diketo-5-methylthiopentyl-1-phosphate (DK-MTP-1-P) into the intermediate 2-hydroxy-3-keto-5-methylthiopentenyl-1-phosphate (HK-MTPenyl-1-P), which is then dephosphorylated to form the acireductone 1,2-dihydroxy-3-keto-5-methylthiopentene (DHK-MTPene). The polypeptide is Enolase-phosphatase E1 (Saccharomyces cerevisiae (strain RM11-1a) (Baker's yeast)).